Here is a 393-residue protein sequence, read N- to C-terminus: 5-azacytidine-induced protein 2 (393 aa).

A homodimerization region spans residues 1-198 (MDALVEDDIC…IELQKAKQTD (198 aa)). The stretch at 40 to 198 (ALVTAYEDIK…IELQKAKQTD (159 aa)) forms a coiled coil. Positions 217-258 (SDNMQSAYWELKREMSNLHLVTQVQAELLRKLKTPAAIKKAC) are interaction with TBK1 and IKBKE. S319 bears the Phosphoserine mark. Disordered stretches follow at residues 321–340 (TDHE…HNSY) and 345–393 (LEDN…HYKH). S354 is subject to Phosphoserine. Over residues 384–393 (QHNQNCHYKH) the composition is skewed to polar residues.

As to quaternary structure, homodimer. Interacts with IKBKE, TBK1 and TICAM1. Interacts with TAX1BP1. Interacts with CALCOCO2. Post-translationally, ubiquitinated via 'Lys-48'-linked polyubiquitination by TRIM38, leading to its degradation.

It is found in the cytoplasm. In terms of biological role, adapter protein which binds TBK1 and IKBKE playing a role in antiviral innate immunity. Activates serine/threonine-protein kinase TBK1 and facilitates its oligomerization. Enhances the phosphorylation of NF-kappa-B p65 subunit RELA by TBK1. Promotes TBK1-induced as well as TNF-alpha or PMA-induced activation of NF-kappa-B. Participates in IFNB promoter activation via TICAM1. The chain is 5-azacytidine-induced protein 2 (AZI2) from Bos taurus (Bovine).